The following is a 258-amino-acid chain: Hydroxyacylglutathione hydrolase (258 aa).

His56, His58, Asp60, His61, His112, Asp132, and His170 together coordinate Zn(2+).

Belongs to the metallo-beta-lactamase superfamily. Glyoxalase II family. As to quaternary structure, monomer. It depends on Zn(2+) as a cofactor.

The catalysed reaction is an S-(2-hydroxyacyl)glutathione + H2O = a 2-hydroxy carboxylate + glutathione + H(+). It functions in the pathway secondary metabolite metabolism; methylglyoxal degradation; (R)-lactate from methylglyoxal: step 2/2. In terms of biological role, thiolesterase that catalyzes the hydrolysis of S-D-lactoyl-glutathione to form glutathione and D-lactic acid. In Pseudomonas aeruginosa (strain LESB58), this protein is Hydroxyacylglutathione hydrolase.